The primary structure comprises 131 residues: Profilin-2 (131 aa).

The cysteines at positions 13 and 115 are disulfide-linked. Positions A81–T97 match the Involved in PIP2 interaction motif. T111 is modified (phosphothreonine).

It belongs to the profilin family. As to quaternary structure, multimer. Occurs in many kinds of cells as a complex with monomeric actin in a 1:1 ratio. In terms of processing, phosphorylated by MAP kinases.

Its subcellular location is the cytoplasm. The protein resides in the cytoskeleton. Binds to actin and affects the structure of the cytoskeleton. At high concentrations, profilin prevents the polymerization of actin, whereas it enhances it at low concentrations. By binding to PIP2, it inhibits the formation of IP3 and DG. The sequence is that of Profilin-2 from Hevea brasiliensis (Para rubber tree).